Reading from the N-terminus, the 141-residue chain is MSSDYRTGREGKEFAYRGHSLDELQEMDVDEVAELLPARQRRSIVRGLGTEQQKLLEKVRSRDKETTADNPIRTHLRDMPILPEFVGVTFSVYNGHSFERVQVEPEMIGHFLGEFHLTRSTVEHGQAGIGATRSSKFVPLK.

This sequence belongs to the universal ribosomal protein uS19 family.

Functionally, protein S19 forms a complex with S13 that binds strongly to the 16S ribosomal RNA. This chain is Small ribosomal subunit protein uS19, found in Halorubrum lacusprofundi (strain ATCC 49239 / DSM 5036 / JCM 8891 / ACAM 34).